The chain runs to 99 residues: NADH-quinone oxidoreductase subunit K (99 aa).

The next 3 helical transmembrane spans lie at 3-23 (ILFSLFISMAMFTFGIIGILI), 28-48 (LIVFMCVELMLNAANLLFVAF), and 59-79 (IWVFFVLVVAAAEAAVGLAII).

It belongs to the complex I subunit 4L family. As to quaternary structure, NDH-1 is composed of 14 different subunits. Subunits NuoA, H, J, K, L, M, N constitute the membrane sector of the complex.

The protein localises to the cell inner membrane. It catalyses the reaction a quinone + NADH + 5 H(+)(in) = a quinol + NAD(+) + 4 H(+)(out). Its function is as follows. NDH-1 shuttles electrons from NADH, via FMN and iron-sulfur (Fe-S) centers, to quinones in the respiratory chain. The immediate electron acceptor for the enzyme in this species is believed to be ubiquinone. Couples the redox reaction to proton translocation (for every two electrons transferred, four hydrogen ions are translocated across the cytoplasmic membrane), and thus conserves the redox energy in a proton gradient. In Protochlamydia amoebophila (strain UWE25), this protein is NADH-quinone oxidoreductase subunit K.